A 684-amino-acid polypeptide reads, in one-letter code: Histone-lysine N-methyltransferase SETMAR (684 aa).

Residues 1 to 345 (MFAEAAKTTR…RLTLETMKMM (345 aa)) are histone-lysine N-methyltransferase. In terms of domain architecture, Pre-SET spans 73 to 136 (PGCICVKTPC…HCRNRVVQKG (64 aa)). 9 residues coordinate Zn(2+): C75, C77, C82, C87, C89, C118, C122, C124, and C128. The 125-residue stretch at 139 to 263 (FHFQVFKTHK…PEEELSYDYS (125 aa)) folds into the SET domain. S-adenosyl-L-methionine contacts are provided by residues 149 to 151 (KGW), Y192, R220, and 223 to 224 (NH). 4 residues coordinate Zn(2+): C226, C287, C289, and C294. A Post-SET domain is found at 283-299 (LRKPCYCGAKSCTAFLP). A mariner transposase Hsmar1 region spans residues 346-684 (LDKKQIRAIF…CVDCNGSYFD (339 aa)). 2 consecutive DNA-binding regions (H-T-H motif) follow at residues 364 to 395 (KAAE…KFCK) and 428 to 448 (TTRE…RHLK). A Mg(2+)-binding site is contributed by D496. The residue at position 498 (K498) is an N6-methyllysine. A Phosphoserine; by CHEK1 modification is found at S508. D588 contributes to the Mg(2+) binding site.

This sequence in the N-terminal section; belongs to the class V-like SAM-binding methyltransferase superfamily. In the C-terminal section; belongs to the mariner transposase family. As to quaternary structure, homodimer. Interacts with PRPF19; required for SETMAR recruitment to damaged DNA sites. Interacts with PCNA. Interacts with TOP2A; stimulates TOP2A topoisomerase activity. May interact with RAD9A and/or RAD9B. The cofactor is Mg(2+). In terms of processing, methylated. Methylation regulates activity in DNA decatenation. Phosphorylated at Ser-508 by CHEK1 and dephosphorylated by protein phosphatase 2A/PP2A. Phosphorylation at Ser-508 is enhanced by DNA damage and promotes recruitment to damaged DNA. It stimulates DNA repair and impairs replication fork restart. In terms of tissue distribution, widely expressed, with highest expression in placenta and ovary and lowest expression in skeletal muscle.

Its subcellular location is the nucleus. It is found in the chromosome. The enzyme catalyses L-lysyl(36)-[histone H3] + 2 S-adenosyl-L-methionine = N(6),N(6)-dimethyl-L-lysyl(36)-[histone H3] + 2 S-adenosyl-L-homocysteine + 2 H(+). Functionally, protein derived from the fusion of a methylase with the transposase of an Hsmar1 transposon that plays a role in DNA double-strand break repair, stalled replication fork restart and DNA integration. DNA-binding protein, it is indirectly recruited to sites of DNA damage through protein-protein interactions. Also has kept a sequence-specific DNA-binding activity recognizing the 19-mer core of the 5'-terminal inverted repeats (TIRs) of the Hsmar1 element and displays a DNA nicking and end joining activity. In parallel, has a histone methyltransferase activity and methylates 'Lys-4' and 'Lys-36' of histone H3. Specifically mediates dimethylation of H3 'Lys-36' at sites of DNA double-strand break and may recruit proteins required for efficient DSB repair through non-homologous end-joining. Also regulates replication fork processing, promoting replication fork restart and regulating DNA decatenation through stimulation of the topoisomerase activity of TOP2A. This is Histone-lysine N-methyltransferase SETMAR from Homo sapiens (Human).